Here is a 402-residue protein sequence, read N- to C-terminus: Phosphoglycerate kinase (402 aa).

Substrate contacts are provided by residues 24–26 (DFN), Arg-40, 63–66 (HFGR), Arg-122, and Arg-155. ATP-binding positions include Lys-206, Gly-297, Glu-328, and 357-360 (GGDS).

It belongs to the phosphoglycerate kinase family. As to quaternary structure, monomer.

It localises to the cytoplasm. It carries out the reaction (2R)-3-phosphoglycerate + ATP = (2R)-3-phospho-glyceroyl phosphate + ADP. Its pathway is carbohydrate degradation; glycolysis; pyruvate from D-glyceraldehyde 3-phosphate: step 2/5. This Synechococcus sp. (strain ATCC 27144 / PCC 6301 / SAUG 1402/1) (Anacystis nidulans) protein is Phosphoglycerate kinase.